Reading from the N-terminus, the 697-residue chain is Potassium-transporting ATPase ATP-binding subunit (697 aa).

The next 4 helical transmembrane spans lie at 55 to 75 (PIMF…FLPS), 79 to 99 (SIPG…VLFA), 245 to 265 (LTLI…YLGF), and 271 to 291 (VLVA…LSAI). Asp324 functions as the 4-aspartylphosphate intermediate in the catalytic mechanism. ATP is bound by residues Asp361, Glu365, 393-400 (FKAETRMS), and Lys412. Residues Asp535 and Asp539 each contribute to the Mg(2+) site. The next 3 membrane-spanning stretches (helical) occupy residues 605 to 625 (FAII…LNIM), 633 to 653 (AILS…PLAM), and 677 to 697 (GGVI…GLFI).

The protein belongs to the cation transport ATPase (P-type) (TC 3.A.3) family. Type IA subfamily. As to quaternary structure, the system is composed of three essential subunits: KdpA, KdpB and KdpC.

It localises to the cell membrane. The catalysed reaction is K(+)(out) + ATP + H2O = K(+)(in) + ADP + phosphate + H(+). Part of the high-affinity ATP-driven potassium transport (or Kdp) system, which catalyzes the hydrolysis of ATP coupled with the electrogenic transport of potassium into the cytoplasm. This subunit is responsible for energy coupling to the transport system and for the release of the potassium ions to the cytoplasm. This Bacillus cereus (strain B4264) protein is Potassium-transporting ATPase ATP-binding subunit.